Consider the following 84-residue polypeptide: Subtilisin-chymotrypsin inhibitor WSCI (84 aa).

The first 12 residues, 1–12, serve as a signal peptide directing secretion; that stretch reads MSSVVKKPLGGN. The disordered stretch occupies residues 1-28; sequence MSSVVKKPLGGNTDTGDHHNQKTEWPEL. Basic and acidic residues predominate over residues 15–25; that stretch reads TGDHHNQKTEW.

As to quaternary structure, monomer.

It localises to the secreted. Inhibits B.lichenoformis subtilisin, B.subtilis subtilisin, bovine pancreatic alpha-chymotrypsin and porcine alpha-chymotrypsin with Ki of 3.92 nM, 5.70 nM, 7.24 nM and 9.35 nM respectively. B.lichenoformis subtilisin is inhibited with a molar ratio of 1:0.87. Also inhibits chymotrypsin-like activities from the digestive tracts of the insect larvae T.molitor, P.interpunctella and H.armigera. Does not inhibit bovine pancreatic trypsin, porcine pancreatic elastase, or human leukocyte elastase. The protein is Subtilisin-chymotrypsin inhibitor WSCI of Triticum aestivum (Wheat).